Here is a 48-residue protein sequence, read N- to C-terminus: uncharacterized protein (48 aa).

The segment at 1-48 (MTKIPINIPATSGKIKFGITPSSNKSPSLSPSPSNGQLGGGRGYILEP) is disordered. Residues 21–36 (PSSNKSPSLSPSPSNG) are compositionally biased toward low complexity. Over residues 37-48 (QLGGGRGYILEP) the composition is skewed to gly residues.

This is an uncharacterized protein from Dictyostelium discoideum (Social amoeba).